The sequence spans 442 residues: Coiled-coil domain-containing protein 112 (442 aa).

Coiled coils occupy residues 23 to 116 (LEEL…RRIE) and 217 to 249 (LEEKKKESIQNWKTKKQQKKEEILKLKEKVDTV). 3 disordered regions span residues 245–272 (KVDTVPLPSQSKAEDSPKQREEQRKKQK), 289–312 (KLASQLREEEEKERKQQRERQRQS), and 392–442 (EKVE…RQGI). 2 stretches are compositionally biased toward basic and acidic residues: residues 256 to 268 (KAEDSPKQREEQR) and 294 to 310 (LREEEEKERKQQRERQR). Residues 281–400 (RKSLEMSAKL…KEKVENNVSR (120 aa)) are a coiled coil.

It is found in the cytoplasm. The protein localises to the cytoskeleton. Its subcellular location is the microtubule organizing center. It localises to the centrosome. The protein resides in the centriolar satellite. The chain is Coiled-coil domain-containing protein 112 (Ccdc112) from Mus musculus (Mouse).